Consider the following 436-residue polypeptide: Tol-Pal system protein TolB (436 aa).

A signal peptide spans 1-28 (MEMLRRNFFRLLMVLVAGCGLIASPAKA).

It belongs to the TolB family. As to quaternary structure, the Tol-Pal system is composed of five core proteins: the inner membrane proteins TolA, TolQ and TolR, the periplasmic protein TolB and the outer membrane protein Pal. They form a network linking the inner and outer membranes and the peptidoglycan layer.

It localises to the periplasm. Functionally, part of the Tol-Pal system, which plays a role in outer membrane invagination during cell division and is important for maintaining outer membrane integrity. The polypeptide is Tol-Pal system protein TolB (Sinorhizobium medicae (strain WSM419) (Ensifer medicae)).